Here is a 55-residue protein sequence, read N- to C-terminus: Large ribosomal subunit protein uL15 (55 aa).

The protein belongs to the universal ribosomal protein uL15 family. Part of the 50S ribosomal subunit.

Its function is as follows. Binds to the 23S rRNA. This chain is Large ribosomal subunit protein uL15 (rplO), found in Lactococcus lactis subsp. cremoris (Streptococcus cremoris).